A 1252-amino-acid chain; its full sequence is Immunoglobulin superfamily DCC subclass member 4 (1252 aa).

A signal peptide spans 1–22 (MARADTGRGLLVLTFCLLSARG). Topologically, residues 23-956 (ELPLPQETTV…SDSLDVHAVT (934 aa)) are extracellular. Ig-like domains are found at residues 27-136 (PQET…VAVV), 142-228 (EDFS…ASLT), 241-329 (QDVV…AELR), and 334-420 (PAIS…APLA). 2 cysteine pairs are disulfide-bonded: Cys-55–Cys-120 and Cys-163–Cys-211. A glycan (N-linked (GlcNAc...) asparagine) is linked at Asn-88. Asn-251 is a glycosylation site (N-linked (GlcNAc...) asparagine). 2 cysteine pairs are disulfide-bonded: Cys-264–Cys-311 and Cys-355–Cys-404. Fibronectin type-III domains lie at 430-524 (APTR…TLDD), 526-622 (PSAA…TPGV), 631-742 (APAE…TPDL), 751-844 (PPAH…TLPD), and 849-944 (PPSD…TLQK). Residues 669 to 688 (TEEEADGDRPPGGRGDQAWD) are disordered. A helical transmembrane segment spans residues 957-977 (GIIVGVCLGLLCLLACMCAGL). At 978–1252 (RRSSHREALP…RAPVSSAQVP (275 aa)) the chain is on the cytoplasmic side. At Thr-994 the chain carries Phosphothreonine.

Belongs to the immunoglobulin superfamily. DCC family. Expressed in skeletal muscle, heart and brain. Brain expression is hippocampus-specific.

Its subcellular location is the cell membrane. The protein is Immunoglobulin superfamily DCC subclass member 4 (Igdcc4) of Mus musculus (Mouse).